Consider the following 945-residue polypeptide: Isoleucine--tRNA ligase (945 aa).

The short motif at 66-76 (PYANGDIHLGH) is the 'HIGH' region element. Glu-581 lines the L-isoleucyl-5'-AMP pocket. The 'KMSKS' region signature appears at 622-626 (KMSKS). Lys-625 serves as a coordination point for ATP. Zn(2+)-binding residues include Cys-908, Cys-911, Cys-928, and Cys-931.

It belongs to the class-I aminoacyl-tRNA synthetase family. IleS type 1 subfamily. Monomer. Requires Zn(2+) as cofactor.

The protein localises to the cytoplasm. It carries out the reaction tRNA(Ile) + L-isoleucine + ATP = L-isoleucyl-tRNA(Ile) + AMP + diphosphate. In terms of biological role, catalyzes the attachment of isoleucine to tRNA(Ile). As IleRS can inadvertently accommodate and process structurally similar amino acids such as valine, to avoid such errors it has two additional distinct tRNA(Ile)-dependent editing activities. One activity is designated as 'pretransfer' editing and involves the hydrolysis of activated Val-AMP. The other activity is designated 'posttransfer' editing and involves deacylation of mischarged Val-tRNA(Ile). This is Isoleucine--tRNA ligase from Burkholderia orbicola (strain MC0-3).